A 277-amino-acid chain; its full sequence is Sulfur carrier protein FdhD (277 aa).

Catalysis depends on Cys-121, which acts as the Cysteine persulfide intermediate. 260–265 (FCKPGR) is a binding site for Mo-bis(molybdopterin guanine dinucleotide).

The protein belongs to the FdhD family.

It localises to the cytoplasm. Functionally, required for formate dehydrogenase (FDH) activity. Acts as a sulfur carrier protein that transfers sulfur from IscS to the molybdenum cofactor prior to its insertion into FDH. This is Sulfur carrier protein FdhD from Shigella dysenteriae serotype 1 (strain Sd197).